Reading from the N-terminus, the 123-residue chain is Snaclec GPIB-binding protein subunit beta (123 aa).

Intrachain disulfides connect C2–C13, C30–C119, and C96–C111. The C-type lectin domain occupies 9 to 120 (YGGHCYKLFK…CTRLQYFVCE (112 aa)).

The protein belongs to the snaclec family. In terms of assembly, heterodimer of subunits alpha and beta; disulfide-linked. As to expression, expressed by the venom gland.

The protein localises to the secreted. Its function is as follows. Binds to platelet GPIb (subunit alpha) (GP1BA) and functions as a receptor blocker for vWF binding to GPIb. The platelet GPIb-binding site resides on the GPIB-BP subunit beta and not on the alpha subunit. At a final concentration of 104 nM totally abolishes vWF-dependent shear-induced platelet aggregation (SIPA) at a high shear stress, but had no effect on SIPA at a low shear stress. The protein is Snaclec GPIB-binding protein subunit beta of Bothrops jararaca (Jararaca).